The primary structure comprises 119 residues: Protein Wnt-4 (119 aa).

Residue Ser1 is the site of O-palmitoleoyl serine; by PORCN attachment. Disulfide bonds link Cys69-Cys100 and Cys85-Cys95. Asn86 is a glycosylation site (N-linked (GlcNAc...) asparagine).

The protein belongs to the Wnt family. Palmitoleoylation is required for efficient binding to frizzled receptors. Depalmitoleoylation leads to Wnt signaling pathway inhibition.

Its subcellular location is the secreted. It localises to the extracellular space. The protein localises to the extracellular matrix. Its function is as follows. Ligand for members of the frizzled family of seven transmembrane receptors. Plays an important role in embryonic development. The polypeptide is Protein Wnt-4 (WNT-4) (Eptatretus stoutii (Pacific hagfish)).